We begin with the raw amino-acid sequence, 459 residues long: MVGSVAGNMLLRAAWRRASLAATSLALGRSSVPTRGLRLRVVDHGPHSPVHSEAEAVLRPLYMDVQATTPLDPRVLDAMLPYLVNYYGNPHSRTHAYGWESEAAMERARQQVASLIGADPREIIFTSGATESNNIAIKGVARFYRSRKKHLVTTQTEHKCVLDSCRSLEAEGFRVTYLPVQKSGIIDLKELEAAIQPDTSLVSVMTVNNEIGVKQPIAEIGQICSSRKVYFHTDAAQAVGKIPLDVNDMKIDLMSISGHKLYGPKGVGAIYIRRRPRVRVEALQSGGGQERGMRSGTVPTPLVVGLGAACELAQQEMEYDHKRISKLAERLVQNIMKNLPDVVMNGDPKQHYPGCINLSFAYVEGESLLMALKDVALSSGSACTSASLEPSYVLRAIGTDEDLAHSSIRFGIGRFTTEEEVDYTAEKCIHHVKRLREMSPLWEMVQDGIDLKSIKWTQH.

A mitochondrion-targeting transit peptide spans 1 to 17 (MVGSVAGNMLLRAAWRR). Residues Ala-129, Thr-130, Gln-237, Ser-257, and His-259 each coordinate pyridoxal 5'-phosphate. N6-(pyridoxal phosphate)lysine is present on Lys-260. Residue Thr-297 coordinates pyridoxal 5'-phosphate. Residue Cys-383 is the Cysteine persulfide intermediate of the active site. Cys-383 serves as a coordination point for [2Fe-2S] cluster. Position 383 (Cys-383) interacts with Zn(2+). Cys-383 carries the cysteine persulfide modification.

It belongs to the class-V pyridoxal-phosphate-dependent aminotransferase family. NifS/IscS subfamily. In terms of assembly, homodimer. Component of the mitochondrial core iron-sulfur cluster (ISC) complex composed of NFS1, LYRM4, NDUFAB1, ISCU, FXN, and FDX2; this complex is a heterohexamer containing two copies of each monomer. Component of cyteine desulfurase complex composed of NFS1, LYRM4 and NDUFAB1; this complex contributes to the activation of cysteine desulfurase activity and NFS1 stabilization. Interacts (homodimer form) with ISCU (D-state); each monomer interacts with the C-terminal regions of each NFS1 monomer. Interacts with HSPA9. Interacts (via homodimer form) with FDX2. Interacts (via homodimer form) with FXN. Interacts with LYRM4. Component of a complex composed of FXN, NFS1, LYRM4 and ISCU. Pyridoxal 5'-phosphate serves as cofactor. Post-translationally, N-gluconoylated. Cysteine persulfide intermediate is reduced by thiol-containing molecules like glutathione and L-cysteine. Persulfide reduction is a rate-limiting step of cysteine desulfurase catalytic cycle. In terms of tissue distribution, ubiquitous.

The protein localises to the mitochondrion. It carries out the reaction (sulfur carrier)-H + L-cysteine = (sulfur carrier)-SH + L-alanine. It catalyses the reaction L-cysteinyl-[cysteine desulfurase] + L-cysteine = S-sulfanyl-L-cysteinyl-[cysteine desulfurase] + L-alanine. Its activity is regulated as follows. Active only in complex with LYRM4. In terms of biological role, mitochondrial cysteine desulfurase, of the core iron-sulfur cluster (ISC) assembly complex, that catalyzes the desulfuration of L-cysteine to L-alanine, as component of the cysteine desulfurase complex, leading to the formation of a cysteine persulfide intermediate at the active site cysteine residue and participates in the [2Fe-2S] clusters assembly on the scaffolding protein ISCU. The persulfide is then transferred on the flexible Cys loop from the catalytic site of NFS1 to the surface of NFS1. After the NFS1-linked persulfide sulfur is transferred to one of the conserved Cys residues of the scaffold, a reaction assisted by FXN. The core iron-sulfur cluster (ISC) assembly complex is involved in the de novo synthesis of a [2Fe-2S] cluster, the first step of the mitochondrial iron-sulfur protein biogenesis. This process is initiated by the cysteine desulfurase complex (NFS1:LYRM4:NDUFAB1) that produces persulfide which is delivered on the scaffold protein ISCU in a FXN-dependent manner. Then this complex is stabilized by FDX2 which provides reducing equivalents to accomplish the [2Fe-2S] cluster assembly. Finally, the [2Fe-2S] cluster is transferred from ISCU to chaperone proteins, including HSCB, HSPA9 and GLRX5. The protein is Cysteine desulfurase of Mus musculus (Mouse).